The following is a 443-amino-acid chain: Autophagy-related protein 13 homolog (443 aa).

Disordered regions lie at residues 232–283 (AKKR…EEDH) and 308–333 (ANGT…KEPT). The span at 240–253 (SVESATSAGSSTSR) shows a compositional bias: polar residues. A compositionally biased stretch (basic and acidic residues) spans 268 to 283 (EDSRHSDVQNSYEEDH). Residues 308-325 (ANGTKKNSSSTCLNSPKS) are compositionally biased toward polar residues.

Belongs to the ATG13 family. Metazoan subfamily. As to quaternary structure, interacts with unc-51 (via C-terminus). Interacts with lgg-1; the interaction is direct.

Its subcellular location is the cytoplasm. It localises to the cytosol. It is found in the preautophagosomal structure. The protein resides in the perikaryon. The protein localises to the cell projection. Its subcellular location is the axon. Its function is as follows. Component of the unc-51/atg-13 complex required for autophagosome formation. Required for the degradation of germ cell specific P-granule components such as sepa-1 by autophagy in somatic cells. This ensures exclusive localization of the P-granules in germ cells. May function downstream of the let-363 (Tor) signaling pathway to mediate sepa-1 degradation. Plays a role in survival during limited food availability. The sequence is that of Autophagy-related protein 13 homolog from Caenorhabditis elegans.